Consider the following 424-residue polypeptide: Protein CapL (424 aa).

Belongs to the UDP-glucose/GDP-mannose dehydrogenase family.

The protein operates within capsule biogenesis; capsule polysaccharide biosynthesis. Required for the biosynthesis of type 1 capsular polysaccharide. The protein is Protein CapL (capL) of Staphylococcus aureus.